Here is a 1135-residue protein sequence, read N- to C-terminus: Topless-related protein 4 (1135 aa).

A LisH domain is found at 4 to 36 (LSRELVFLILQFLDEEKFKDTVHRLEKESGFFF). Positions 34 to 92 (FFFNMRYFEDSVTAGEWDDVEKYLSGFTKVDDNRYSMKIFFEIRKQKYLEALDKKDHAK) constitute a CTLH domain. A Phosphoserine modification is found at Ser214. Residues 281–303 (LKRERPRSPPTNSLSMDYQTADS) are disordered. Residues 290–303 (PTNSLSMDYQTADS) are compositionally biased toward polar residues. 12 WD repeats span residues 355-395 (SQGS…KLVS), 417-456 (EYTA…DLRN), 462-503 (AHAG…KLHT), 506-547 (GHEA…SRVD), 550-593 (APGR…VKRT), 597-636 (LGKR…LLSS), 638-680 (AAEG…RILH), 776-815 (LLPA…RNLL), 843-881 (NKED…TMTT), 884-924 (APPP…VKSK), 927-966 (GHQK…KQAS), and 1020-1059 (ESSG…LKCR). Residues 1095–1135 (DGGVHVIEPPGPEGKWGISAPPENGAGPSVSSAPGSDQQPR) form a disordered region. A compositionally biased stretch (low complexity) spans 1119–1135 (GAGPSVSSAPGSDQQPR).

In terms of assembly, tetramer. Interacts with WUS (via the C-terminal domain). Interacts with SPL (via EAR motif). Interacts with SPEAR3/TIE1. Binds to and corepresses GAF1/IDD2 at the promoter of GA20OX2 gene.

Its subcellular location is the nucleus. Transcription corepressor of Zinc finger transcription factors GAF1/IDD2 and ENY/IDD1 in regulation of gibberellin homeostasis and signaling. This chain is Topless-related protein 4 (TPR4), found in Arabidopsis thaliana (Mouse-ear cress).